A 490-amino-acid chain; its full sequence is ATP synthase subunit beta (490 aa).

Residue 173–180 (GGAGVGKT) participates in ATP binding.

Belongs to the ATPase alpha/beta chains family. In terms of assembly, F-type ATPases have 2 components, CF(1) - the catalytic core - and CF(0) - the membrane proton channel. CF(1) has five subunits: alpha(3), beta(3), gamma(1), delta(1), epsilon(1). CF(0) has three main subunits: a(1), b(2) and c(9-12). The alpha and beta chains form an alternating ring which encloses part of the gamma chain. CF(1) is attached to CF(0) by a central stalk formed by the gamma and epsilon chains, while a peripheral stalk is formed by the delta and b chains.

Its subcellular location is the cell membrane. The catalysed reaction is ATP + H2O + 4 H(+)(in) = ADP + phosphate + 5 H(+)(out). In terms of biological role, produces ATP from ADP in the presence of a proton gradient across the membrane. The catalytic sites are hosted primarily by the beta subunits. This Bifidobacterium longum subsp. infantis (strain ATCC 15697 / DSM 20088 / JCM 1222 / NCTC 11817 / S12) protein is ATP synthase subunit beta.